The sequence spans 253 residues: Imidazole glycerol phosphate synthase subunit HisF (253 aa).

Catalysis depends on residues Asp-11 and Asp-130.

This sequence belongs to the HisA/HisF family. In terms of assembly, heterodimer of HisH and HisF.

Its subcellular location is the cytoplasm. The catalysed reaction is 5-[(5-phospho-1-deoxy-D-ribulos-1-ylimino)methylamino]-1-(5-phospho-beta-D-ribosyl)imidazole-4-carboxamide + L-glutamine = D-erythro-1-(imidazol-4-yl)glycerol 3-phosphate + 5-amino-1-(5-phospho-beta-D-ribosyl)imidazole-4-carboxamide + L-glutamate + H(+). It participates in amino-acid biosynthesis; L-histidine biosynthesis; L-histidine from 5-phospho-alpha-D-ribose 1-diphosphate: step 5/9. IGPS catalyzes the conversion of PRFAR and glutamine to IGP, AICAR and glutamate. The HisF subunit catalyzes the cyclization activity that produces IGP and AICAR from PRFAR using the ammonia provided by the HisH subunit. The sequence is that of Imidazole glycerol phosphate synthase subunit HisF from Dehalococcoides mccartyi (strain CBDB1).